The chain runs to 413 residues: Peptidase T (413 aa).

Histidine 81 is a Zn(2+) binding site. The active site involves aspartate 83. Residue aspartate 143 coordinates Zn(2+). Glutamate 178 serves as the catalytic Proton acceptor. Glutamate 179, aspartate 201, and histidine 383 together coordinate Zn(2+).

This sequence belongs to the peptidase M20B family. It depends on Zn(2+) as a cofactor.

It is found in the cytoplasm. It carries out the reaction Release of the N-terminal residue from a tripeptide.. In terms of biological role, cleaves the N-terminal amino acid of tripeptides. The polypeptide is Peptidase T (Lactococcus lactis subsp. hordniae).